The primary structure comprises 92 residues: Large ribosomal subunit protein bL28 (92 aa).

This sequence belongs to the bacterial ribosomal protein bL28 family.

This chain is Large ribosomal subunit protein bL28, found in Borrelia duttonii (strain Ly).